The primary structure comprises 239 residues: MKSIPGDIPQYLLIKAQLQARIQSGALKSGDKLPSERELCAIFNTTRITIRESLAQLESSGLIWRADRRGWFVTPERLWLDPTQNTNFHKLCREQGREPKTALLSGVLTTVPVEVMEPLQLQPFDQIYLLTRLRYADGRAVCYCENHCLPARVPELLQYDLNGSLTEVYESYYNLVYTSMHLSFYPTAMPAQAAQALGVMEGRPALLLRRLNYDQHGRVLDLDIEYWRHDSLRIEVDTH.

The region spanning 8–76 (IPQYLLIKAQ…DRRGWFVTPE (69 aa)) is the HTH gntR-type domain. Residues 36-55 (ERELCAIFNTTRITIRESLA) constitute a DNA-binding region (H-T-H motif).

The chain is Putative transcriptional regulator of 2-aminoethylphosphonate degradation operons (phnR) from Salmonella paratyphi A (strain ATCC 9150 / SARB42).